The chain runs to 504 residues: Cytochrome P450 2K1 (504 aa).

Cys-447 serves as a coordination point for heme.

Belongs to the cytochrome P450 family. Heme is required as a cofactor.

Its subcellular location is the endoplasmic reticulum membrane. It localises to the microsome membrane. The enzyme catalyses an organic molecule + reduced [NADPH--hemoprotein reductase] + O2 = an alcohol + oxidized [NADPH--hemoprotein reductase] + H2O + H(+). The chain is Cytochrome P450 2K1 (cyp2k1) from Oncorhynchus mykiss (Rainbow trout).